Reading from the N-terminus, the 310-residue chain is tRNA dimethylallyltransferase (310 aa).

Residue 11 to 18 (GPTAVGKT) participates in ATP binding. A substrate-binding site is contributed by 13 to 18 (TAVGKT). The interaction with substrate tRNA stretch occupies residues 36–39 (DSMQ).

The protein belongs to the IPP transferase family. In terms of assembly, monomer. Mg(2+) is required as a cofactor.

It carries out the reaction adenosine(37) in tRNA + dimethylallyl diphosphate = N(6)-dimethylallyladenosine(37) in tRNA + diphosphate. Its function is as follows. Catalyzes the transfer of a dimethylallyl group onto the adenine at position 37 in tRNAs that read codons beginning with uridine, leading to the formation of N6-(dimethylallyl)adenosine (i(6)A). The polypeptide is tRNA dimethylallyltransferase (Shouchella clausii (strain KSM-K16) (Alkalihalobacillus clausii)).